A 508-amino-acid polypeptide reads, in one-letter code: Photosystem II CP47 reaction center protein (508 aa).

6 helical membrane-spanning segments follow: residues 21–36, 101–115, 140–156, 203–218, 237–252, and 457–472; these read AVHL…WAGS, IVLS…IWHW, GIHL…FGAF, IAAG…FHLS, VLSS…AFVV, and TFAL…HGAR.

Belongs to the PsbB/PsbC family. PsbB subfamily. In terms of assembly, PSII is composed of 1 copy each of membrane proteins PsbA, PsbB, PsbC, PsbD, PsbE, PsbF, PsbH, PsbI, PsbJ, PsbK, PsbL, PsbM, PsbT, PsbX, PsbY, PsbZ, Psb30/Ycf12, at least 3 peripheral proteins of the oxygen-evolving complex and a large number of cofactors. It forms dimeric complexes. Binds multiple chlorophylls. PSII binds additional chlorophylls, carotenoids and specific lipids. is required as a cofactor.

The protein resides in the plastid. The protein localises to the chloroplast thylakoid membrane. In terms of biological role, one of the components of the core complex of photosystem II (PSII). It binds chlorophyll and helps catalyze the primary light-induced photochemical processes of PSII. PSII is a light-driven water:plastoquinone oxidoreductase, using light energy to abstract electrons from H(2)O, generating O(2) and a proton gradient subsequently used for ATP formation. The chain is Photosystem II CP47 reaction center protein from Anthoceros angustus (Hornwort).